The following is a 381-amino-acid chain: Heterogeneous nuclear rnp K-like protein 2 (381 aa).

A disordered region spans residues 1–34; the sequence is MSQFFEAATPVAIPTNNTNGGSSDAGSAATGGAP. The span at 15–33 shows a compositional bias: low complexity; sequence TNNTNGGSSDAGSAATGGA. 3 KH domains span residues 43 to 107, 156 to 221, and 258 to 326; these read TINH…IGDI, IGYV…LIEI, and NTRI…ESML. Residues 357 to 381 are disordered; sequence RSDSASFLEEKEEPQKNHDNKEEQS. Phosphoserine is present on residues Ser-358, Ser-360, and Ser-362. The span at 369 to 381 shows a compositional bias: basic and acidic residues; that stretch reads EPQKNHDNKEEQS.

The protein belongs to the HEK2 family. As to quaternary structure, binds RNA. In terms of processing, phosphorylated by the plasma membrane-Anchored casein kinase YCK1. Phosphorylation at its C-terminus reduces its RNA-binding capacity.

The protein resides in the cytoplasm. The protein localises to the P-body. Its subcellular location is the nucleus. It localises to the chromosome. It is found in the telomere. RNA-binding protein involved in the correct localization of transcripts in the cell. RNA localization is a widespread mechanism for achieving localized protein synthesis. Required for the asymmetric localization to the daughter cell nucleus of the ASH1 transcript, coding for a specific repressor of transcription. Overexpression inhibits translation of the ASH1 transcript. Involved in the stability of transcripts, like the MTL1 mRNA. Involved in structural and functional organization of telomeric chromatin and regulates silencing at the HMR locus. This chain is Heterogeneous nuclear rnp K-like protein 2 (HEK2), found in Saccharomyces cerevisiae (strain RM11-1a) (Baker's yeast).